Here is a 61-residue protein sequence, read N- to C-terminus: Large ribosomal subunit protein uL30 (61 aa).

Belongs to the universal ribosomal protein uL30 family. Part of the 50S ribosomal subunit.

The chain is Large ribosomal subunit protein uL30 from Mycolicibacterium gilvum (strain PYR-GCK) (Mycobacterium gilvum (strain PYR-GCK)).